The following is a 276-amino-acid chain: Large ribosomal subunit protein uL2 (276 aa).

Positions 221-276 (RGSAMNPNDHPHGGGEGRAPIGRKSPMTPWGKKARGVKTRDRKKASNALIIRRRTK) are disordered. The segment covering 252–276 (KKARGVKTRDRKKASNALIIRRRTK) has biased composition (basic residues).

The protein belongs to the universal ribosomal protein uL2 family. In terms of assembly, part of the 50S ribosomal subunit. Forms a bridge to the 30S subunit in the 70S ribosome.

Functionally, one of the primary rRNA binding proteins. Required for association of the 30S and 50S subunits to form the 70S ribosome, for tRNA binding and peptide bond formation. It has been suggested to have peptidyltransferase activity; this is somewhat controversial. Makes several contacts with the 16S rRNA in the 70S ribosome. The chain is Large ribosomal subunit protein uL2 from Onion yellows phytoplasma (strain OY-M).